A 209-amino-acid polypeptide reads, in one-letter code: Uracil phosphoribosyltransferase (209 aa).

Residues Arg-79, Arg-104, and 131 to 139 (DPMLATGVS) each bind 5-phospho-alpha-D-ribose 1-diphosphate. Uracil-binding positions include Ile-194 and 199 to 201 (GDA). Position 200 (Asp-200) interacts with 5-phospho-alpha-D-ribose 1-diphosphate.

Belongs to the UPRTase family. Requires Mg(2+) as cofactor.

It catalyses the reaction UMP + diphosphate = 5-phospho-alpha-D-ribose 1-diphosphate + uracil. It functions in the pathway pyrimidine metabolism; UMP biosynthesis via salvage pathway; UMP from uracil: step 1/1. Allosterically activated by GTP. Its function is as follows. Catalyzes the conversion of uracil and 5-phospho-alpha-D-ribose 1-diphosphate (PRPP) to UMP and diphosphate. The polypeptide is Uracil phosphoribosyltransferase (Thermotoga maritima (strain ATCC 43589 / DSM 3109 / JCM 10099 / NBRC 100826 / MSB8)).